Consider the following 198-residue polypeptide: Imidazoleglycerol-phosphate dehydratase (198 aa).

It belongs to the imidazoleglycerol-phosphate dehydratase family.

The protein resides in the cytoplasm. It carries out the reaction D-erythro-1-(imidazol-4-yl)glycerol 3-phosphate = 3-(imidazol-4-yl)-2-oxopropyl phosphate + H2O. It participates in amino-acid biosynthesis; L-histidine biosynthesis; L-histidine from 5-phospho-alpha-D-ribose 1-diphosphate: step 6/9. This is Imidazoleglycerol-phosphate dehydratase from Methylobacillus flagellatus (strain ATCC 51484 / DSM 6875 / VKM B-1610 / KT).